The chain runs to 276 residues: 4-hydroxy-tetrahydrodipicolinate reductase (276 aa).

Position 16–21 (16–21) interacts with NAD(+); sequence GALGKM. Residue Lys44 participates in NADP(+) binding. NAD(+) is bound by residues 109–111 and 135–138; these read GTT and APNF. His165 acts as the Proton donor/acceptor in catalysis. His166 is a (S)-2,3,4,5-tetrahydrodipicolinate binding site. Residue Lys169 is the Proton donor of the active site. 175 to 176 contacts (S)-2,3,4,5-tetrahydrodipicolinate; it reads GT.

The protein belongs to the DapB family.

The protein localises to the cytoplasm. The enzyme catalyses (S)-2,3,4,5-tetrahydrodipicolinate + NAD(+) + H2O = (2S,4S)-4-hydroxy-2,3,4,5-tetrahydrodipicolinate + NADH + H(+). It catalyses the reaction (S)-2,3,4,5-tetrahydrodipicolinate + NADP(+) + H2O = (2S,4S)-4-hydroxy-2,3,4,5-tetrahydrodipicolinate + NADPH + H(+). Its pathway is amino-acid biosynthesis; L-lysine biosynthesis via DAP pathway; (S)-tetrahydrodipicolinate from L-aspartate: step 4/4. Functionally, catalyzes the conversion of 4-hydroxy-tetrahydrodipicolinate (HTPA) to tetrahydrodipicolinate. The protein is 4-hydroxy-tetrahydrodipicolinate reductase of Thermosynechococcus vestitus (strain NIES-2133 / IAM M-273 / BP-1).